We begin with the raw amino-acid sequence, 73 residues long: Putative neurotoxin NaH-Cpp1a (73 aa).

The signal sequence occupies residues 1 to 23; sequence MKSFYGILCVAVLMMFHLEMSES. Intrachain disulfides connect Cys43–Cys58, Cys50–Cys63, and Cys57–Cys70.

Expressed outside of acontia.

It is found in the secreted. The protein resides in the nematocyst. Putative neurotoxin. This chain is Putative neurotoxin NaH-Cpp1a, found in Calliactis polypus (Hermit crab anemone).